The primary structure comprises 253 residues: Triosephosphate isomerase (253 aa).

9–11 (NWK) is a substrate binding site. The Electrophile role is filled by H96. Catalysis depends on E169, which acts as the Proton acceptor. Substrate contacts are provided by residues G175, S215, and 236–237 (GG).

The protein belongs to the triosephosphate isomerase family. As to quaternary structure, homodimer.

Its subcellular location is the cytoplasm. It catalyses the reaction D-glyceraldehyde 3-phosphate = dihydroxyacetone phosphate. Its pathway is carbohydrate biosynthesis; gluconeogenesis. It participates in carbohydrate degradation; glycolysis; D-glyceraldehyde 3-phosphate from glycerone phosphate: step 1/1. In terms of biological role, involved in the gluconeogenesis. Catalyzes stereospecifically the conversion of dihydroxyacetone phosphate (DHAP) to D-glyceraldehyde-3-phosphate (G3P). This Borreliella burgdorferi (strain ZS7) (Borrelia burgdorferi) protein is Triosephosphate isomerase.